The primary structure comprises 245 residues: Probable histone chaperone asf-1-like protein (245 aa).

A compositionally biased stretch (acidic residues) spans 157 to 166 (EDPVAEPVDE). The tract at residues 157-245 (EDPVAEPVDE…SGDVEMGDKH (89 aa)) is disordered. The segment covering 167-183 (EANKVFDEDDLMPLHDD) has biased composition (basic and acidic residues). Over residues 184–206 (GQDDDEEEEDDDETGPNTEEVDL) the composition is skewed to acidic residues. Basic and acidic residues predominate over residues 215–245 (ANAHDGTEQKNGEESMEHDGASGDVEMGDKH).

This sequence belongs to the ASF1 family. In terms of assembly, interacts with histone H3 and histone H4.

It localises to the nucleus. In terms of biological role, histone chaperone that facilitates histone deposition and histone exchange and removal during nucleosome assembly and disassembly. In Caenorhabditis elegans, this protein is Probable histone chaperone asf-1-like protein (asfl-1).